The sequence spans 264 residues: Thymidylate synthase 2 (264 aa).

A dUMP-binding site is contributed by arginine 21. Histidine 51 is a binding site for (6R)-5,10-methylene-5,6,7,8-tetrahydrofolate. Residue 126–127 participates in dUMP binding; it reads RR. The Nucleophile role is filled by cysteine 146. DUMP-binding positions include 166–169, asparagine 177, and 207–209; these read RSAD and HIY. Aspartate 169 is a binding site for (6R)-5,10-methylene-5,6,7,8-tetrahydrofolate. Residue serine 263 participates in (6R)-5,10-methylene-5,6,7,8-tetrahydrofolate binding.

It belongs to the thymidylate synthase family. Bacterial-type ThyA subfamily. Homodimer.

It is found in the cytoplasm. It carries out the reaction dUMP + (6R)-5,10-methylene-5,6,7,8-tetrahydrofolate = 7,8-dihydrofolate + dTMP. It participates in pyrimidine metabolism; dTTP biosynthesis. Its function is as follows. Catalyzes the reductive methylation of 2'-deoxyuridine-5'-monophosphate (dUMP) to 2'-deoxythymidine-5'-monophosphate (dTMP) while utilizing 5,10-methylenetetrahydrofolate (mTHF) as the methyl donor and reductant in the reaction, yielding dihydrofolate (DHF) as a by-product. This enzymatic reaction provides an intracellular de novo source of dTMP, an essential precursor for DNA biosynthesis. The sequence is that of Thymidylate synthase 2 from Bacillus spizizenii (strain ATCC 23059 / NRRL B-14472 / W23) (Bacillus subtilis subsp. spizizenii).